A 289-amino-acid polypeptide reads, in one-letter code: MITGKTKLLGVIGHPVEHSLSPVMHNAAIAQLGLDYVYLPFPIAPDNLEAAIALLATIGVVGFSVTIPHKQAIIPLLAEISPVAQAIGAVNTVTRQNNQWVGTNTDIEGFIAPLQTTYKRDWSQQIAVILGNGGAARAVVAGCYQLGFAEIHVVGRNVQRLEEFRHSWDNSPIAENLQVHTWDYLAKLVPQANLLVNTTPIGMYPQVDESPLSTEELANLQTGAIAYDLIYIPKPTQFLQKAQQQGAIAIDGLEMLVQQGVAALKIWLQQDDIPVDVMRQALQKHLGLV.

Residues 19–21 (SLS) and Thr-66 contribute to the shikimate site. The active-site Proton acceptor is Lys-70. Shikimate-binding residues include Asn-91 and Asp-106. NADP(+) contacts are provided by residues 131–135 (GNGGA) and Leu-229. Tyr-231 provides a ligand contact to shikimate. Gly-252 serves as a coordination point for NADP(+).

Belongs to the shikimate dehydrogenase family. As to quaternary structure, homodimer.

It carries out the reaction shikimate + NADP(+) = 3-dehydroshikimate + NADPH + H(+). Its pathway is metabolic intermediate biosynthesis; chorismate biosynthesis; chorismate from D-erythrose 4-phosphate and phosphoenolpyruvate: step 4/7. Its function is as follows. Involved in the biosynthesis of the chorismate, which leads to the biosynthesis of aromatic amino acids. Catalyzes the reversible NADPH linked reduction of 3-dehydroshikimate (DHSA) to yield shikimate (SA). This is Shikimate dehydrogenase (NADP(+)) from Trichormus variabilis (strain ATCC 29413 / PCC 7937) (Anabaena variabilis).